The primary structure comprises 239 residues: uncharacterized protein (239 aa).

A run of 7 helical transmembrane segments spans residues 20–40 (ILIW…WLVL), 48–68 (FSSV…LGLL), 80–100 (WILL…GFHF), 106–126 (IYAM…TYLF), 143–163 (LILL…EILV), 164–184 (MIAG…DILH), and 192–212 (IPGA…VLYF).

It belongs to the cytomegalovirus US12 family.

The protein localises to the membrane. This is an uncharacterized protein from Homo sapiens (Human).